The sequence spans 928 residues: Envelope glycoprotein B (928 aa).

Positions 1–12 (MAARGGAERAAG) are enriched in low complexity. Disordered stretches follow at residues 1-25 (MAAR…RHLR) and 67-105 (GRPA…SPDN). The first 62 residues, 1–62 (MAARGGAERA…LWATWALLLA (62 aa)), serve as a signal peptide directing secretion. The Virion surface segment spans residues 63–803 (APAAGRPATT…SGIASFIANP (741 aa)). The span at 71-95 (TTPPAPPPEEAASPAPPASPSPPGP) shows a compositional bias: pro residues. 2 N-linked (GlcNAc...) asparagine; by host glycosylation sites follow: Asn-105 and Asn-153. 5 disulfide bridges follow: Cys-128-Cys-606, Cys-145-Cys-562, Cys-219-Cys-283, Cys-376-Cys-424, and Cys-627-Cys-662. Involved in fusion and/or binding to host membrane regions lie at residues 185 to 191 (TWAGSTY) and 270 to 277 (GSAGLYRT). N-linked (GlcNAc...) asparagine; by host glycosylation is found at Asn-442 and Asn-484. Positions 495–525 (APKPGPRRARRPRRLRPAPGRGQRARRRRHA) are disordered. A compositionally biased stretch (basic residues) spans 499–510 (GPRRARRPRRLR). Residues Asn-637 and Asn-703 are each glycosylated (N-linked (GlcNAc...) asparagine; by host). 2 hydrophobic membrane proximal region regions span residues 748-801 (IDRV…SFIA) and 781-801 (VVLG…SFIA). Residues 804 to 824 (FGALATGLLVLAGLVAAFLAY) form a helical membrane-spanning segment. Residues 825-928 (RYISRLRSNP…QLPMADVGGA (104 aa)) are Intravirion-facing. Positions 876-879 (YMSL) match the Golgi targeting motif. The Internalization motif motif lies at 917–920 (YQQL).

It belongs to the herpesviridae glycoprotein B family. In terms of assembly, homotrimer; disulfide-linked. Binds to heparan sulfate proteoglycans. Interacts with gH/gL heterodimer. Post-translationally, a proteolytic cleavage by host furin generates two subunits that remain linked by disulfide bonds.

The protein localises to the virion membrane. It is found in the host cell membrane. Its subcellular location is the host endosome membrane. The protein resides in the host Golgi apparatus membrane. Functionally, envelope glycoprotein that forms spikes at the surface of virion envelope. Essential for the initial attachment to heparan sulfate moieties of the host cell surface proteoglycans. Involved in fusion of viral and cellular membranes leading to virus entry into the host cell. Following initial binding to its host receptors, membrane fusion is mediated by the fusion machinery composed at least of gB and the heterodimer gH/gL. May be involved in the fusion between the virion envelope and the outer nuclear membrane during virion egress. This is Envelope glycoprotein B from Bovine herpesvirus 1.1 (strain P8-2) (BoHV-1).